Consider the following 362-residue polypeptide: Lipoprotein p35 (362 aa).

The signal sequence occupies residues 1 to 30 (MKIKKIKLLKALALTGAFGIVATVPVIVSS). Cys-31 carries the N-palmitoyl cysteine lipid modification. Cys-31 carries S-diacylglycerol cysteine lipidation. The segment at 33 to 53 (STSENNGNGNGNGGTDGNTQQ) is disordered.

Belongs to the p35 lipoprotein family. In terms of processing, the N-terminus is blocked.

It localises to the cell membrane. Functionally, major M.penetrans antigen. The sequence is that of Lipoprotein p35 from Malacoplasma penetrans (Mycoplasma penetrans).